The following is a 278-amino-acid chain: DNA repair protein RecO (278 aa).

Polar residues predominate over residues 1-12; sequence MGTNDALTSTED. The disordered stretch occupies residues 1 to 42; it reads MGTNDALTSTEDAVTAGANDAPLPAPPEPPRKARRATSRTSD.

It belongs to the RecO family.

In terms of biological role, involved in DNA repair and RecF pathway recombination. This Burkholderia lata (strain ATCC 17760 / DSM 23089 / LMG 22485 / NCIMB 9086 / R18194 / 383) protein is DNA repair protein RecO.